A 121-amino-acid polypeptide reads, in one-letter code: MDPNTVSSFQDILLRMSKMQLESSSEDLNGMITQFESLKLYRDSLGEAVMRMGDLHSLQNRNEKWREQLGQKFEEIRWLIEEVRHKLKITENSFEQITFMQALHLLLEVEQEIRTFSFQLI.

2 short sequence motifs (nuclear export signal) span residues 12 to 21 (ILLRMSKMQL) and 85 to 94 (HKLKITENSF).

This sequence belongs to the influenza viruses NEP family. In terms of assembly, interacts with protein M1. May interact with host nucleoporin RAB/HRB and exportin XPO1/CRM1.

The protein localises to the virion. The protein resides in the host nucleus. In terms of biological role, mediates the nuclear export of encapsidated genomic RNAs (ribonucleoproteins, RNPs). Acts as an adapter between viral RNPs complexes and the nuclear export machinery of the cell. Possesses no intrinsic RNA-binding activity, but includes a C-terminal M1-binding domain. This domain is believed to allow recognition of RNPs bound to the protein M1. Since protein M1 is not available in large quantities before late stages of infection, such an indirect recognition mechanism probably ensures that genomic RNPs are not exported from the host nucleus until sufficient quantities of viral mRNA and progeny genomic RNA have been synthesized. Furthermore, the RNPs enter the host cytoplasm only when associated with the M1 protein that is necessary to guide them to the plasma membrane. May down-regulate viral RNA synthesis when overproduced. This is Nuclear export protein from Aves (whales).